The sequence spans 165 residues: V-type proton ATPase 16 kDa proteolipid subunit (165 aa).

The Lumenal portion of the chain corresponds to 1–12 (MSTVFNGDETAP). A helical transmembrane segment spans residues 13–33 (FFGFLGAAAALVFSCMGAAYG). At 34-55 (TAKSGVGVASMGVMRPELVMKS) the chain is on the cytoplasmic side. The chain crosses the membrane as a helical span at residues 56-76 (IVPVVMAGVLGIYGLIIAVII). Residues 77–95 (STGINPKAKSYYLFDGYAH) lie on the Lumenal side of the membrane. Residues 96–117 (LSSGLACGLAGLSAGMAIGIVG) form a helical membrane-spanning segment. The Cytoplasmic portion of the chain corresponds to 118 to 129 (DAGVRANAQQPK). A helical transmembrane segment spans residues 130–155 (LFVGMILILIFAEALALYGLIVGIIL). Residues 156–165 (SSRAGQSRAD) lie on the Lumenal side of the membrane.

The protein belongs to the V-ATPase proteolipid subunit family. As to quaternary structure, V-ATPase is a heteromultimeric enzyme composed of a peripheral catalytic V1 complex (main components: subunits A, B, C, D, E, and F) attached to an integral membrane V0 proton pore complex (main component: the proteolipid protein; which is present as a hexamer that forms the proton-conducting pore).

It localises to the vacuole membrane. Its function is as follows. Proton-conducting pore forming subunit of the membrane integral V0 complex of vacuolar ATPase. V-ATPase is responsible for acidifying a variety of intracellular compartments in eukaryotic cells. The chain is V-type proton ATPase 16 kDa proteolipid subunit (VMAC1) from Mesembryanthemum crystallinum (Common ice plant).